The primary structure comprises 274 residues: Purine nucleoside phosphorylase YlmD (274 aa).

Position 46–47 (46–47 (LH)) interacts with inosine. Positions 80, 125, 142, 182, 183, 242, and 245 each coordinate Zn(2+). R262 is a binding site for inosine.

It belongs to the purine nucleoside phosphorylase YfiH/LACC1 family. Zn(2+) serves as cofactor.

It carries out the reaction adenosine + phosphate = alpha-D-ribose 1-phosphate + adenine. The enzyme catalyses S-methyl-5'-thioadenosine + phosphate = 5-(methylsulfanyl)-alpha-D-ribose 1-phosphate + adenine. The catalysed reaction is inosine + phosphate = alpha-D-ribose 1-phosphate + hypoxanthine. It catalyses the reaction adenosine + H2O + H(+) = inosine + NH4(+). Its function is as follows. Purine nucleoside enzyme that catalyzes the phosphorolysis of adenosine and inosine nucleosides, yielding D-ribose 1-phosphate and the respective free bases, adenine and hypoxanthine. Also catalyzes the phosphorolysis of S-methyl-5'-thioadenosine into adenine and S-methyl-5-thio-alpha-D-ribose 1-phosphate. Also has adenosine deaminase activity. The chain is Purine nucleoside phosphorylase YlmD from Geobacillus stearothermophilus (strain DSM 13240 / CIP 106956 / 10).